The following is a 386-amino-acid chain: Caspase-12 (386 aa).

The CARD domain occupies 1 to 91 (MAGKRQSQDP…LLSLKSHAEN (91 aa)). At S84 the chain carries Phosphoserine. Residues H218 and C266 contribute to the active site.

This sequence belongs to the peptidase C14A family. In terms of assembly, heterotetramer that consists of two anti-parallel arranged heterodimers, each one formed by two subunits (Potential). May interact with TRAF2.

In terms of biological role, involved in the activation cascade of caspases responsible for apoptosis execution. The protein is Caspase-12 of Canis lupus familiaris (Dog).